Consider the following 122-residue polypeptide: Large ribosomal subunit protein uL14 (122 aa).

This sequence belongs to the universal ribosomal protein uL14 family. In terms of assembly, part of the 50S ribosomal subunit. Forms a cluster with proteins L3 and L19. In the 70S ribosome, L14 and L19 interact and together make contacts with the 16S rRNA in bridges B5 and B8.

In terms of biological role, binds to 23S rRNA. Forms part of two intersubunit bridges in the 70S ribosome. The protein is Large ribosomal subunit protein uL14 of Mycobacterium marinum (strain ATCC BAA-535 / M).